The sequence spans 168 residues: NAD(P)H-quinone oxidoreductase subunit J, chloroplastic (168 aa).

It belongs to the complex I 30 kDa subunit family. NDH is composed of at least 16 different subunits, 5 of which are encoded in the nucleus.

The protein localises to the plastid. It is found in the chloroplast thylakoid membrane. It catalyses the reaction a plastoquinone + NADH + (n+1) H(+)(in) = a plastoquinol + NAD(+) + n H(+)(out). It carries out the reaction a plastoquinone + NADPH + (n+1) H(+)(in) = a plastoquinol + NADP(+) + n H(+)(out). Functionally, NDH shuttles electrons from NAD(P)H:plastoquinone, via FMN and iron-sulfur (Fe-S) centers, to quinones in the photosynthetic chain and possibly in a chloroplast respiratory chain. The immediate electron acceptor for the enzyme in this species is believed to be plastoquinone. Couples the redox reaction to proton translocation, and thus conserves the redox energy in a proton gradient. This is NAD(P)H-quinone oxidoreductase subunit J, chloroplastic from Chaetosphaeridium globosum (Charophycean green alga).